Reading from the N-terminus, the 494-residue chain is UPF0371 protein str1377 (494 aa).

The protein belongs to the UPF0371 family.

The polypeptide is UPF0371 protein str1377 (Streptococcus thermophilus (strain CNRZ 1066)).